We begin with the raw amino-acid sequence, 557 residues long: Pectinesterase/pectinesterase inhibitor 18 (557 aa).

Residues 1–34 (MSNSNQPLLSKPKSLKHKNLCLVLSFVAILGSVA) form the signal peptide. The pectinesterase inhibitor 18 stretch occupies residues 47–203 (NNDDSLLTTS…VSRARVALAI (157 aa)). The segment at 246-543 (NVVVAKDGTG…FTVAKLIQGG (298 aa)) is pectinesterase 18. Residues Thr321 and Gln351 each coordinate substrate. The active-site Proton donor; for pectinesterase activity is Asp374. Asp395 acts as the Nucleophile; for pectinesterase activity in catalysis. 2 residues coordinate substrate: Arg463 and Trp465.

This sequence in the N-terminal section; belongs to the PMEI family. It in the C-terminal section; belongs to the pectinesterase family. Expressed in siliques, flowers, floral stems, rosette leaves and roots.

The protein resides in the secreted. The protein localises to the cell wall. It catalyses the reaction [(1-&gt;4)-alpha-D-galacturonosyl methyl ester](n) + n H2O = [(1-&gt;4)-alpha-D-galacturonosyl](n) + n methanol + n H(+). It carries out the reaction Endohydrolysis of the N-glycosidic bond at one specific adenosine on the 28S rRNA.. It participates in glycan metabolism; pectin degradation; 2-dehydro-3-deoxy-D-gluconate from pectin: step 1/5. Its function is as follows. Acts in the modification of cell walls via demethylesterification of cell wall pectin. Inhibits the elongation phase of protein synthesis. The chain is Pectinesterase/pectinesterase inhibitor 18 (PME18) from Arabidopsis thaliana (Mouse-ear cress).